The following is a 120-amino-acid chain: MIALGGASGACLRFFISESMLKLLGRGFPFGTLAVNILGSLLMGILYGLLDKDIIAESPAKALIGVGFLGALTTFSTFSMDSLLLLQQGHFIKMALNIILNVMVCIFMAWLGLQLVMQKG.

The next 3 helical transmembrane spans lie at 30-50 (FGTL…YGLL), 66-86 (VGFL…LLLL), and 96-116 (LNII…LQLV). Glycine 70 and threonine 73 together coordinate Na(+).

The protein belongs to the fluoride channel Fluc/FEX (TC 1.A.43) family.

The protein localises to the cell inner membrane. The catalysed reaction is fluoride(in) = fluoride(out). Na(+) is not transported, but it plays an essential structural role and its presence is essential for fluoride channel function. Its function is as follows. Fluoride-specific ion channel. Important for reducing fluoride concentration in the cell, thus reducing its toxicity. The chain is Fluoride-specific ion channel FluC from Pseudoalteromonas translucida (strain TAC 125).